A 292-amino-acid polypeptide reads, in one-letter code: uncharacterized protein (292 aa).

Residues Leu-17, Asp-55, Asn-82, and Lys-115 each contribute to the NADP(+) site. Ser-134 acts as the Proton donor in catalysis. 3 residues coordinate NADP(+): Tyr-148, Lys-152, and Thr-184. Catalysis depends on Tyr-148, which acts as the Proton acceptor. Lys-152 acts as the Lowers pKa of active site Tyr in catalysis.

It belongs to the short-chain dehydrogenases/reductases (SDR) family.

Its subcellular location is the cytoplasm. This is an uncharacterized protein from Schizosaccharomyces pombe (strain 972 / ATCC 24843) (Fission yeast).